The sequence spans 317 residues: tRNA dimethylallyltransferase (317 aa).

18 to 25 (GPTATGKT) is an ATP binding site. Position 20–25 (20–25 (TATGKT)) interacts with substrate. Interaction with substrate tRNA stretches follow at residues 43-46 (DSAL), 167-171 (QRIQR), and 281-288 (KRQITWLR).

Belongs to the IPP transferase family. Monomer. Mg(2+) is required as a cofactor.

It catalyses the reaction adenosine(37) in tRNA + dimethylallyl diphosphate = N(6)-dimethylallyladenosine(37) in tRNA + diphosphate. Functionally, catalyzes the transfer of a dimethylallyl group onto the adenine at position 37 in tRNAs that read codons beginning with uridine, leading to the formation of N6-(dimethylallyl)adenosine (i(6)A). In Alkalilimnicola ehrlichii (strain ATCC BAA-1101 / DSM 17681 / MLHE-1), this protein is tRNA dimethylallyltransferase.